The primary structure comprises 134 residues: Small ribosomal subunit protein bS16 (134 aa).

Residues 105-134 form a disordered region; that stretch reads QNERREKRLAIKTRRRQAKKAAEAEGQESA. Over residues 114–123 the composition is skewed to basic residues; that stretch reads AIKTRRRQAK.

It belongs to the bacterial ribosomal protein bS16 family.

The protein is Small ribosomal subunit protein bS16 of Chlorobium phaeobacteroides (strain BS1).